The primary structure comprises 317 residues: Melanocyte-stimulating hormone receptor (317 aa).

Residues 1–37 lie on the Extracellular side of the membrane; it reads MPLQGPQRRLLGSLNSTLPATPYLGLTTNQTEPPCLE. The N-linked (GlcNAc...) asparagine glycan is linked to Asn-29. The chain crosses the membrane as a helical span at residues 38–63; sequence VSIPDGLFLSLGLVSLVENVLVVTAI. Residues 64–72 are Cytoplasmic-facing; the sequence is AKNRNLHSP. Residues 73–93 traverse the membrane as a helical segment; the sequence is MYYFICCLAVSDLLVSMSNVL. The Extracellular segment spans residues 94–118; it reads EMAILLLLEAGVLATQASVLQQLDN. The chain crosses the membrane as a helical span at residues 119–140; that stretch reads IIDVLICGSMVSSLCFLGSIAV. Residues 141–163 lie on the Cytoplasmic side of the membrane; it reads DRYISIFYALRYHSIMMLPRVWR. The chain crosses the membrane as a helical span at residues 164–183; the sequence is AIVAIWVVSVLSSTLFIAYY. Topologically, residues 184 to 191 are extracellular; the sequence is NHTAVLLC. The helical transmembrane segment at 192–211 threads the bilayer; sequence LVTFFVAMLVLMAVLYVHML. The Cytoplasmic segment spans residues 212 to 240; sequence ARACQHARGIARLHKRQHPIHQGFGLKGA. A helical transmembrane segment spans residues 241-266; the sequence is ATLTILLGVFFLCWGPFFLHLSLLIL. The Extracellular segment spans residues 267 to 279; the sequence is CPQHPTCGCVFKN. A helical transmembrane segment spans residues 280–300; the sequence is FKLFLTLILCSAIVDPLIYAF. At 301 to 317 the chain is on the cytoplasmic side; the sequence is RSQELRKTLQEVLLCSW. A lipid anchor (S-palmitoyl cysteine) is attached at Cys-315.

Belongs to the G-protein coupled receptor 1 family. As to quaternary structure, interacts with MGRN1, but does not undergo MGRN1-mediated ubiquitination; this interaction competes with GNAS-binding and thus inhibits agonist-induced cAMP production. Interacts with OPN3; the interaction results in a decrease in MC1R-mediated cAMP signaling and ultimately a decrease in melanin production in melanocytes.

Its subcellular location is the cell membrane. In terms of biological role, receptor for MSH (alpha, beta and gamma) and ACTH. The activity of this receptor is mediated by G proteins which activate adenylate cyclase. Mediates melanogenesis, the production of eumelanin (black/brown) and phaeomelanin (red/yellow), via regulation of cAMP signaling in melanocytes. This chain is Melanocyte-stimulating hormone receptor (MC1R), found in Equus caballus (Horse).